A 397-amino-acid chain; its full sequence is DNA-directed RNA polymerase subunit Rpo1C (397 aa).

Belongs to the RNA polymerase beta' chain family. In terms of assembly, part of the RNA polymerase complex. An artificial construct of the RNAP clamp domain (including part of this protein) contacts transcription elongation factors Spt4 and Spt5.

Its subcellular location is the cytoplasm. The catalysed reaction is RNA(n) + a ribonucleoside 5'-triphosphate = RNA(n+1) + diphosphate. DNA-dependent RNA polymerase (RNAP) catalyzes the transcription of DNA into RNA using the four ribonucleoside triphosphates as substrates. Forms part of the jaw domain. The chain is DNA-directed RNA polymerase subunit Rpo1C from Pyrococcus furiosus (strain ATCC 43587 / DSM 3638 / JCM 8422 / Vc1).